The primary structure comprises 529 residues: MLMLLVRGTHYESLRSKVVLPTPLGGRGTEALVSECPSPDTGIRWRQSDEALRVNVGGVRRLLSARALARFPGTRLGRLQAAASEEQARRLCDDYDAAAREFYFDRHPGFFLGLLHFYRTGHLHVLDELCVFAFGQEADYWGLGENALAACCRARYLERRLSQPRAWDEDSDTPSSVDPCPDEISDVQRELARYGAARCGRLRRRLWLTMENPGYSLPSKLFSCVSISVVLASIAAMCIHSLPEYQAREAAAAVAAVAAGRSPEGVRDDPVLRRLEYFCIAWFSFEVSSRLLLAPSTRNFFCHPLNLIDIVSVLPFYLTLLAGVALGDQGGTGGKELGHLGKVVQVFRLMRIFRVLKLARHSTGLRSLGATLKHSYREVGILLLYLAVGVSVFSGVAYTAEKEEDVGFNTIPACWWWGTVSMTTVGYGDVVPVTVAGKLAASGCILGGILVVALPITIIFNKFSHFYRRQKALEAAVRNSNHQEFEDLLSSVDGVSEASLETSRETSQEGRSADLETQAPSEPPHPQMY.

Over 1 to 217 (MLMLLVRGTH…LTMENPGYSL (217 aa)) the chain is Cytoplasmic. The chain crosses the membrane as a helical span at residues 218-239 (PSKLFSCVSISVVLASIAAMCI). Over 240–270 (HSLPEYQAREAAAAVAAVAAGRSPEGVRDDP) the chain is Extracellular. A helical membrane pass occupies residues 271 to 293 (VLRRLEYFCIAWFSFEVSSRLLL). Topologically, residues 294–304 (APSTRNFFCHP) are cytoplasmic. Residues 305–322 (LNLIDIVSVLPFYLTLLA) form a helical membrane-spanning segment. Over 323–340 (GVALGDQGGTGGKELGHL) the chain is Extracellular. Residues 341–361 (GKVVQVFRLMRIFRVLKLARH) form a helical; Voltage-sensor membrane-spanning segment. Residues 362 to 376 (STGLRSLGATLKHSY) are Cytoplasmic-facing. The chain crosses the membrane as a helical span at residues 377-398 (REVGILLLYLAVGVSVFSGVAY). The Extracellular segment spans residues 399–411 (TAEKEEDVGFNTI). Positions 412 to 423 (PACWWWGTVSMT) form an intramembrane region, helical. A Selectivity filter motif is present at residues 424–429 (TVGYGD). The stretch at 424 to 431 (TVGYGDVV) is an intramembrane region. Over 432–438 (PVTVAGK) the chain is Extracellular. Residues 439–467 (LAASGCILGGILVVALPITIIFNKFSHFY) traverse the membrane as a helical segment. The Cytoplasmic portion of the chain corresponds to 468–529 (RRQKALEAAV…PSEPPHPQMY (62 aa)). Residues 494–529 (GVSEASLETSRETSQEGRSADLETQAPSEPPHPQMY) form a disordered region. Residues 502 to 514 (TSRETSQEGRSAD) show a composition bias toward basic and acidic residues.

This sequence belongs to the potassium channel family. S (TC 1.A.1.2) subfamily. Kv9.1/KCNS1 sub-subfamily. In terms of assembly, heterotetramer with KCNB1. Heterotetramer with KCNB2. Does not form homomultimers.

The protein localises to the cell membrane. Potassium channel regulatory subunit that modulate the delayed rectifier voltage-gated potassium channel activity of KCNB1 and KCNB2 by altering their kinetics, expression levels, and shifting the half-inactivation potential to more polarized values. While it does not form functional channels on its own, it can form functional heterotetrameric channels with KCNB1 and KCNB2. Each regulatory subunit has unique regulatory properties that can lead to extensive inhibition, significant changes in kinetics, and/or substantial shifts in the voltage dependencies of the inactivation process. The chain is Delayed-rectifier potassium channel regulatory subunit KCNS1 from Chlorocebus aethiops (Green monkey).